The chain runs to 474 residues: Type I restriction enzyme EcoBI specificity subunit (474 aa).

This sequence belongs to the type-I restriction system S methylase family. As to quaternary structure, the type I restriction/modification system is composed of three polypeptides R, M and S. The restriction enzyme has stoichiometry R(2)M(2)S(1) while the methyltransferase is M(2)S(1).

In terms of biological role, the specificity (S) subunit of a type I restriction enzyme; this subunit dictates DNA sequence specificity. The M and S subunits together form a methyltransferase (MTase) that methylates A-3 on the top strand and A-4 on the bottom strand of the sequence 5'-TGAN(8)TGCT-3'. In the presence of the R subunit the complex can also act as an endonuclease, binding to the same target sequence but cutting the DNA some distance from this site. Whether the DNA is cut or modified depends on the methylation state of the target sequence. When the target site is unmodified, the DNA is cut. When the target site is hemimethylated, the complex acts as a maintenance MTase modifying the DNA so that both strands become methylated. After locating a non-methylated recognition site, the enzyme complex serves as a molecular motor that translocates DNA in an ATP-dependent manner until a collision occurs that triggers cleavage. The protein is Type I restriction enzyme EcoBI specificity subunit of Escherichia coli.